The primary structure comprises 304 residues: Rhodopsin (304 aa).

The Extracellular segment spans residues 1-13; it reads YEYPQYYLVNPAA. Residues 14–38 form a helical membrane-spanning segment; it reads YAALGAYMFLLILVGFPINFLTLYV. Topologically, residues 39–50 are cytoplasmic; that stretch reads TIEHKKLRTPLN. The chain crosses the membrane as a helical span at residues 51 to 73; the sequence is YILLNLAVANLFMVFGGFTTTMF. Residues 74-87 lie on the Extracellular side of the membrane; sequence TSIRGYFVLGHLGC. Cys-87 and Cys-164 are joined by a disulfide. The helical transmembrane segment at 88-110 threads the bilayer; the sequence is NLEGFFATLSGEIALWSLVVLAI. The 'Ionic lock' involved in activated form stabilization signature appears at 111 to 113; that stretch reads ERW. Residues 111–129 lie on the Cytoplasmic side of the membrane; sequence ERWVVVCKPISNFRFGENH. Residues 130–150 traverse the membrane as a helical segment; the sequence is AIMGLAFTWTMAMACAAPPLV. At 151–179 the chain is on the extracellular side; it reads GWSRYIPEGMQCSCGIDYYTRAEGFNNES. Asn-177 carries an N-linked (GlcNAc...) asparagine glycan. Residues 180 to 201 traverse the membrane as a helical segment; sequence FVVYMFTCHFMTPLTIVFFCYG. Topologically, residues 202 to 229 are cytoplasmic; that stretch reads RLLCAVKEAAAAQQESETTQRAEREVTR. Residues 230-251 form a helical membrane-spanning segment; sequence MVVIMVIAFLICWCPYAGVAWF. Over 252 to 263 the chain is Extracellular; it reads IFTHQGSEFGPV. A helical transmembrane segment spans residues 264–285; the sequence is FMTIPAFFAKSSSIYNPMIYIC. The residue at position 273 (Lys-273) is an N6-(retinylidene)lysine. The Cytoplasmic portion of the chain corresponds to 286 to 304; that stretch reads LNKQFRHCMITTLCCGKKA. S-palmitoyl cysteine attachment occurs at residues Cys-299 and Cys-300.

Belongs to the G-protein coupled receptor 1 family. Opsin subfamily. Post-translationally, phosphorylated on some or all of the serine and threonine residues present in the C-terminal region. In terms of processing, contains one covalently linked retinal chromophore.

It localises to the membrane. Its subcellular location is the cell projection. The protein localises to the cilium. It is found in the photoreceptor outer segment. Its function is as follows. Photoreceptor required for image-forming vision at low light intensity. While most salt water fish species use retinal as chromophore, most freshwater fish use 3-dehydroretinal, or a mixture of retinal and 3-dehydroretinal. Light-induced isomerization of 11-cis to all-trans retinal triggers a conformational change that activates signaling via G-proteins. Subsequent receptor phosphorylation mediates displacement of the bound G-protein alpha subunit by arrestin and terminates signaling. In Ictalurus punctatus (Channel catfish), this protein is Rhodopsin (rho).